Here is a 372-residue protein sequence, read N- to C-terminus: Heat-inducible transcription repressor HrcA (372 aa).

It belongs to the HrcA family.

Negative regulator of class I heat shock genes (grpE-dnaK-dnaJ and groELS operons). Prevents heat-shock induction of these operons. The protein is Heat-inducible transcription repressor HrcA of Chloroflexus aurantiacus (strain ATCC 29366 / DSM 635 / J-10-fl).